The following is a 133-amino-acid chain: Thioredoxin-2, mitochondrial (133 aa).

Residues 1–29 (MRGFIANSLKPHMRSFALRRSFTSSRILR) constitute a mitochondrion transit peptide. In terms of domain architecture, Thioredoxin spans 30–133 (KVNAVESFGD…LSSLLAKYQE (104 aa)). Residues C59 and C62 each act as nucleophile in the active site. C59 and C62 are disulfide-bonded.

The protein belongs to the thioredoxin family. In terms of assembly, interacts with arg3.

It localises to the mitochondrion. In terms of biological role, disulfide reductase which serves multiple functions in mitochondria, protecting mitochondrial components against thiol-oxidative damage as a thiol-disulfide oxidoreductase, and supporting urea cycle and respiration in mitochondria in a manner independent of active site thiols. This Schizosaccharomyces pombe (strain 972 / ATCC 24843) (Fission yeast) protein is Thioredoxin-2, mitochondrial (trx2).